Here is a 420-residue protein sequence, read N- to C-terminus: Hemojuvelin (420 aa).

An N-terminal signal peptide occupies residues 1–32; that stretch reads MGQSPSPRSPHGSPPTLSTLTLLLLLCGQAHS. Y43 is subject to Phosphotyrosine. An N-linked (GlcNAc...) asparagine glycan is attached at N111. The interval 113-135 is disordered; sequence SRQGPTAPPPARGPALPGAGPAP. Residues 125–134 are compositionally biased toward low complexity; it reads GPALPGAGPA. Disulfide bonds link C141–C223 and C160–C310. N-linked (GlcNAc...) asparagine glycosylation is found at N206 and N365. D393 carries GPI-anchor amidated aspartate lipidation. Residues 394-420 constitute a propeptide, removed in mature form; the sequence is AGPPLSPAICLVPLLSALFVLWLCFSK.

The protein belongs to the repulsive guidance molecule (RGM) family. As to quaternary structure, interacts with BMP2 and BMP4. Interacts with BMP6. Interacts with BMPR1B. Interacts with TMPRSS6. In terms of processing, autocatalytically cleaved at low pH; the two chains remain linked via two disulfide bonds. Also proteolytically processed by TMPRSS6, several fragments being released in the extracellular space; regulates HJV activity in BMP signaling and thefore iron homeostasis. Muscle cell lineage.

The protein localises to the cell membrane. Its function is as follows. Acts as a bone morphogenetic protein (BMP) coreceptor. Through enhancement of BMP signaling regulates hepcidin (HAMP) expression and regulates iron homeostasis. The chain is Hemojuvelin from Mus musculus (Mouse).